The sequence spans 738 residues: Flagellar radial spoke protein 2 (738 aa).

At Arg-104 the chain carries Asymmetric dimethylarginine. Acidic residues-rich tracts occupy residues 134 to 153 (PDWV…EDEA) and 161 to 182 (EGEE…DGEG). The interval 134–189 (PDWVAPEDDEAAAVETEDEAAGGAALAEGEEPPPEPEPEPEAAPEDGEGDAPAPKI) is disordered. Asymmetric dimethylarginine is present on Arg-260. A disordered region spans residues 357 to 426 (AAAEAAAAAP…PPKPKKKKKV (70 aa)). Positions 371–415 (EGEEGEGEAPPAEEEPPAEEEAEEEEEEAEEGAEEGAEEGEEGEE) are enriched in acidic residues. Asymmetric dimethylarginine occurs at positions 453, 538, and 615. The segment at 674-738 (AEAGEGEAVA…SSEESKAAAE (65 aa)) is disordered. A compositionally biased stretch (low complexity) spans 689 to 730 (PAEAEAAPAEGEAAPPAEGEGEAQPAQEGSNSSSSSSDSSSS).

Belongs to the dpy-30 family. Post-translationally, asymmetrically dimethylated at Arg-104, Arg-260, Arg-453, Arg-538 and Arg-615 during flagellum resorption. Probably methylated by PRMT1.

It localises to the cytoplasm. It is found in the cytoskeleton. The protein localises to the flagellum axoneme. Functionally, flagellar radial spokes contribute to the regulation of dynein arm activity and thus the pattern of flagellar bending. They consist of a thin stalk, which is attached to the a subfiber of the outer doublet microtubule, and a bulbous head, which is attached to the stalk and appears to interact with the projections from the central pair of microtubules. Binds calmodulin in a calcium-dependent manner. The protein is Flagellar radial spoke protein 2 of Chlamydomonas reinhardtii (Chlamydomonas smithii).